A 455-amino-acid polypeptide reads, in one-letter code: Mitochondrial distribution and morphology protein 10 (455 aa).

Disordered regions lie at residues 216 to 249, 278 to 311, and 377 to 399; these read WETTNGENGTNTSAPGNASNSRAGVKRVDEEDAV, IRFSTMPDATPPSAQIPPPSPFTPDPTTSGPSPA, and PRSSTDSGEEGAEKPSYPSPLGE. Residues 217–227 show a composition bias toward low complexity; it reads ETTNGENGTNT. The span at 228–237 shows a compositional bias: polar residues; that stretch reads SAPGNASNSR. Pro residues predominate over residues 291-301; it reads AQIPPPSPFTP.

The protein belongs to the MDM10 family. In terms of assembly, component of the ER-mitochondria encounter structure (ERMES) or MDM complex, composed of MMM1, MDM10, MDM12 and MDM34. Associates with the mitochondrial outer membrane sorting assembly machinery SAM(core) complex.

The protein localises to the mitochondrion outer membrane. Component of the ERMES/MDM complex, which serves as a molecular tether to connect the endoplasmic reticulum and mitochondria. Components of this complex are involved in the control of mitochondrial shape and protein biogenesis and may function in phospholipid exchange. MDM10 is involved in the late assembly steps of the general translocase of the mitochondrial outer membrane (TOM complex). Functions in the TOM40-specific route of the assembly of outer membrane beta-barrel proteins, including the association of TOM40 with the receptor TOM22 and small TOM proteins. Can associate with the SAM(core) complex as well as the MDM12-MMM1 complex, both involved in late steps of the major beta-barrel assembly pathway, that is responsible for biogenesis of all outer membrane beta-barrel proteins. May act as a switch that shuttles between both complexes and channels precursor proteins into the TOM40-specific pathway. Plays a role in mitochondrial morphology and in the inheritance of mitochondria. The sequence is that of Mitochondrial distribution and morphology protein 10 from Coprinopsis cinerea (strain Okayama-7 / 130 / ATCC MYA-4618 / FGSC 9003) (Inky cap fungus).